The following is a 464-amino-acid chain: C-terminal processing peptidase, chloroplastic (464 aa).

The N-terminal 32 residues, 1-32, are a transit peptide targeting the chloroplast; that stretch reads MHSRTNCLQTSVRAPQPHFRPFTAVKTCRQRC. A thylakoid-targeting transit peptide spans 33–77; sequence STTAAAAKRDQAQEQQPWIQVGLGLAAAATAVAVGLGAAALPAQA. The PDZ domain maps to 149–234; that stretch reads LAALRRGTAG…SQVEVVLHAP (86 aa). Active-site charge relay system residues include Ser372 and Lys397.

It belongs to the peptidase S41A family. As to quaternary structure, monomer.

Its subcellular location is the plastid. It is found in the chloroplast thylakoid lumen. It carries out the reaction The enzyme shows specific recognition of a C-terminal tripeptide, Xaa-Yaa-Zaa, in which Xaa is preferably Ala or Leu, Yaa is preferably Ala or Tyr, and Zaa is preferably Ala, but then cleaves at a variable distance from the C-terminus. A typical cleavage is -Ala-Ala-|-Arg-Ala-Ala-Lys-Glu-Asn-Tyr-Ala-Leu-Ala-Ala.. Not inhibited by antipain, 4-amidinophenylmethanesulfonyl fluoride, aprotinin, chymostatin, 3,4-dichloroisocoumarin, diisopropyl fluorophosphate, E64, EDTA, EGTA, iodoacetamide, leupeptin, pepstatin, o-phenanthroline, N-ethylmaleimide, phosphoramidon or phenylmethylsulfonyl fluoride. Its function is as follows. Protease involved in the C-terminal processing of the chloroplastic D1 protein of photosystem II. This proteolytic processing is necessary to allow the light-driven assembly of the tetranuclear manganese cluster, which is responsible for photosynthetic water oxidation. The chain is C-terminal processing peptidase, chloroplastic (ctpA) from Tetradesmus obliquus (Green alga).